Here is a 393-residue protein sequence, read N- to C-terminus: Probable tRNA sulfurtransferase (393 aa).

The region spanning 61 to 168 (DEVIESLTRV…GDVINIYSIE (108 aa)) is the THUMP domain. Residues 186-187 (LL), 211-212 (YF), R268, G290, and Q299 contribute to the ATP site.

This sequence belongs to the ThiI family.

Its subcellular location is the cytoplasm. It catalyses the reaction [ThiI sulfur-carrier protein]-S-sulfanyl-L-cysteine + a uridine in tRNA + 2 reduced [2Fe-2S]-[ferredoxin] + ATP + H(+) = [ThiI sulfur-carrier protein]-L-cysteine + a 4-thiouridine in tRNA + 2 oxidized [2Fe-2S]-[ferredoxin] + AMP + diphosphate. It carries out the reaction [ThiS sulfur-carrier protein]-C-terminal Gly-Gly-AMP + S-sulfanyl-L-cysteinyl-[cysteine desulfurase] + AH2 = [ThiS sulfur-carrier protein]-C-terminal-Gly-aminoethanethioate + L-cysteinyl-[cysteine desulfurase] + A + AMP + 2 H(+). It participates in cofactor biosynthesis; thiamine diphosphate biosynthesis. Catalyzes the ATP-dependent transfer of a sulfur to tRNA to produce 4-thiouridine in position 8 of tRNAs, which functions as a near-UV photosensor. Also catalyzes the transfer of sulfur to the sulfur carrier protein ThiS, forming ThiS-thiocarboxylate. This is a step in the synthesis of thiazole, in the thiamine biosynthesis pathway. The sulfur is donated as persulfide by IscS. In Lachnospira eligens (strain ATCC 27750 / DSM 3376 / VPI C15-48 / C15-B4) (Eubacterium eligens), this protein is Probable tRNA sulfurtransferase.